The sequence spans 466 residues: Asparagine--tRNA ligase (466 aa).

Belongs to the class-II aminoacyl-tRNA synthetase family. As to quaternary structure, homodimer.

The protein resides in the cytoplasm. It catalyses the reaction tRNA(Asn) + L-asparagine + ATP = L-asparaginyl-tRNA(Asn) + AMP + diphosphate + H(+). The sequence is that of Asparagine--tRNA ligase from Shewanella sp. (strain MR-4).